We begin with the raw amino-acid sequence, 494 residues long: Anaerobic nitric oxide reductase flavorubredoxin (494 aa).

The interval 30-210 (TKGTSYNSYL…PFSALVTAKI (181 aa)) is zinc metallo-hydrolase. 6 residues coordinate Fe cation: His79, Glu81, Asp83, His147, Asp166, and His227. Residues 254-393 (ITIFYDSMSN…ECREHGQQIA (140 aa)) form the Flavodoxin-like domain. Residues 260-264 (SMSNN) and 342-369 (AFGSYGWNGGAVDRIHARLTDAGFETAI) each bind FMN. Residues 441 to 492 (CQCMVCTVCNWVYDPAKGEPNQGIEVGTTWADVPDYFLCPECHLGKDVFVEY) enclose the Rubredoxin-like domain. 4 residues coordinate Fe cation: Cys446, Cys449, Cys479, and Cys482.

The protein in the N-terminal section; belongs to the zinc metallo-hydrolase group 3 family. As to quaternary structure, homotetramer. Fe cation is required as a cofactor. FMN serves as cofactor.

The protein localises to the cytoplasm. Its pathway is nitrogen metabolism; nitric oxide reduction. Anaerobic nitric oxide reductase; uses NADH to detoxify nitric oxide (NO), protecting several 4Fe-4S NO-sensitive enzymes. Has at least 2 reductase partners, only one of which (NorW, flavorubredoxin reductase) has been identified. NO probably binds to the di-iron center; electrons enter from the NorW at rubredoxin and are transferred sequentially to the FMN center and the di-iron center. Also able to function as an aerobic oxygen reductase. This Vibrio vulnificus (strain YJ016) protein is Anaerobic nitric oxide reductase flavorubredoxin.